Here is a 242-residue protein sequence, read N- to C-terminus: MSRYQAALLGLGLLLMFLLYMGLPGPPKQTSQLGRGPNVTVLTGLTRGSSQIFYREVLPLQQTHRAEVVFLHGKAFNSHTWEQLGTLQLLSKRGYRAVAVDLPGFGNSAPSKEVSTESGRVELLEGVLRDLQLQNTVLVSPSLSGSYALPFLMQSHHQLCGFVPIAPTSTRNYAQEQFQAVKTPTLILYGELDHTLARESLQQLRHLPNHSVVKLHNAGHACYLHKPEAFHLALLAFLDHLP.

Residues 6–26 traverse the membrane as a helical; Signal-anchor for type II membrane protein segment; that stretch reads AALLGLGLLLMFLLYMGLPGP. The N-linked (GlcNAc...) asparagine glycan is linked to N38. Catalysis depends on charge relay system residues S142, D193, and H220.

This sequence belongs to the AB hydrolase superfamily. ABHD14 family.

It is found in the cytoplasm. It localises to the membrane. Its function is as follows. Possible role in granule neuron development. In Rattus norvegicus (Rat), this protein is Protein ABHD14A.